We begin with the raw amino-acid sequence, 350 residues long: tRNA N6-adenosine threonylcarbamoyltransferase (350 aa).

Fe cation-binding residues include His109 and His113. Substrate is bound by residues 136-140, Asp169, Gly182, Asp186, and Asn284; that span reads TVSGG. Residue Asp312 participates in Fe cation binding.

It belongs to the KAE1 / TsaD family. Fe(2+) is required as a cofactor.

The protein localises to the cytoplasm. The catalysed reaction is L-threonylcarbamoyladenylate + adenosine(37) in tRNA = N(6)-L-threonylcarbamoyladenosine(37) in tRNA + AMP + H(+). In terms of biological role, required for the formation of a threonylcarbamoyl group on adenosine at position 37 (t(6)A37) in tRNAs that read codons beginning with adenine. Is involved in the transfer of the threonylcarbamoyl moiety of threonylcarbamoyl-AMP (TC-AMP) to the N6 group of A37, together with TsaE and TsaB. TsaD likely plays a direct catalytic role in this reaction. This is tRNA N6-adenosine threonylcarbamoyltransferase from Chlorobium chlorochromatii (strain CaD3).